Reading from the N-terminus, the 356-residue chain is Histidinol-phosphate aminotransferase (356 aa).

Residue lysine 222 is modified to N6-(pyridoxal phosphate)lysine.

This sequence belongs to the class-II pyridoxal-phosphate-dependent aminotransferase family. Histidinol-phosphate aminotransferase subfamily. Homodimer. Pyridoxal 5'-phosphate is required as a cofactor.

It catalyses the reaction L-histidinol phosphate + 2-oxoglutarate = 3-(imidazol-4-yl)-2-oxopropyl phosphate + L-glutamate. The protein operates within amino-acid biosynthesis; L-histidine biosynthesis; L-histidine from 5-phospho-alpha-D-ribose 1-diphosphate: step 7/9. The sequence is that of Histidinol-phosphate aminotransferase from Lactiplantibacillus plantarum (strain ATCC BAA-793 / NCIMB 8826 / WCFS1) (Lactobacillus plantarum).